The sequence spans 95 residues: Co-chaperonin GroES (95 aa).

It belongs to the GroES chaperonin family. Heptamer of 7 subunits arranged in a ring. Interacts with the chaperonin GroEL.

It is found in the cytoplasm. In terms of biological role, together with the chaperonin GroEL, plays an essential role in assisting protein folding. The GroEL-GroES system forms a nano-cage that allows encapsulation of the non-native substrate proteins and provides a physical environment optimized to promote and accelerate protein folding. GroES binds to the apical surface of the GroEL ring, thereby capping the opening of the GroEL channel. The chain is Co-chaperonin GroES from Stenotrophomonas maltophilia (strain R551-3).